A 237-amino-acid chain; its full sequence is MSNPIYKRILLKLSGEALQGAEGFGIDPSILDRMALEIKELIAMGVEVGVVLGGGNLFRGAKLAKAGMNRVVGDHMGMLATVMNGLAMRDALHRADVNAKLMSAFQLNGICDTYNWSEAIKMLREKRVVIFSGGTGSPFFTTDSAACLRGIEIEADVVLKATKVDGVYNCDPAKNPGAELFNTLTYADVIERELKVMDLAAFTLARDHGMPIRVFNMGKPGALREVVTGLTEGTIIS.

Residue 12 to 15 participates in ATP binding; it reads KLSG. The interval 20–25 is involved in allosteric activation by GTP; the sequence is GAEGFG. G54 provides a ligand contact to UMP. ATP is bound by residues G55 and R59. UMP-binding positions include D74 and 135-142; that span reads TGSPFFTT. ATP-binding residues include T162, Y168, and D171.

Belongs to the UMP kinase family. In terms of assembly, homohexamer.

It is found in the cytoplasm. The catalysed reaction is UMP + ATP = UDP + ADP. The protein operates within pyrimidine metabolism; CTP biosynthesis via de novo pathway; UDP from UMP (UMPK route): step 1/1. Its activity is regulated as follows. Allosterically activated by GTP. Inhibited by UTP. Functionally, catalyzes the reversible phosphorylation of UMP to UDP. In Actinobacillus succinogenes (strain ATCC 55618 / DSM 22257 / CCUG 43843 / 130Z), this protein is Uridylate kinase.